The sequence spans 1043 residues: Peroxisomal ATPase PEX1 (1043 aa).

The segment at 453 to 626 (ATPAIILDGK…SKNQIMKLNR (174 aa)) is AAA-cassette D1. ATP contacts are provided by residues 461 to 468 (GKQGIGKT) and 738 to 745 (GYPGCGKT). Residues 733-926 (GILLYGYPGC…CYNAYLKSVH (194 aa)) form an AAA-cassette D2 region.

It belongs to the AAA ATPase family. In terms of assembly, interacts with PEX6; forming the PEX1-PEX6 AAA ATPase complex, which is composed of a heterohexamer formed by a trimer of PEX1-PEX6 dimers. The PEX1-PEX6 heterooligomers associate with the peroxisomal importomer via interaction of PEX6 with the peroxisomal membrane anchor PEX15.

Its subcellular location is the cytoplasm. The protein localises to the cytosol. It is found in the peroxisome membrane. It carries out the reaction ATP + H2O = ADP + phosphate + H(+). Functionally, component of the PEX1-PEX6 AAA ATPase complex, a protein dislocase complex that mediates the ATP-dependent extraction of the PEX5 receptor from peroxisomal membranes, an essential step for PEX5 recycling. Specifically recognizes PEX5 monoubiquitinated at 'Cys-6', and pulls it out of the peroxisome lumen through the PEX2-PEX10-PEX12 retrotranslocation channel. Extraction by the PEX1-PEX6 AAA ATPase complex is accompanied by unfolding of the TPR repeats and release of bound cargo from PEX5. The polypeptide is Peroxisomal ATPase PEX1 (Saccharomyces cerevisiae (strain ATCC 204508 / S288c) (Baker's yeast)).